Reading from the N-terminus, the 227-residue chain is uncharacterized protein (227 aa).

One can recognise an AMMECR1 domain in the interval 5 to 220 (TSSPYAFYAF…IAWDEFETGL (216 aa)).

This is an uncharacterized protein from Kluyveromyces lactis (strain ATCC 8585 / CBS 2359 / DSM 70799 / NBRC 1267 / NRRL Y-1140 / WM37) (Yeast).